Reading from the N-terminus, the 129-residue chain is uncharacterized protein (129 aa).

This is an uncharacterized protein from Saccharomyces cerevisiae (strain ATCC 204508 / S288c) (Baker's yeast).